Reading from the N-terminus, the 663-residue chain is Zeaxanthin epoxidase, chloroplastic (663 aa).

A chloroplast-targeting transit peptide spans 1–50 (MYSTVFYTSVHPSTSAFSRKQLPLLISKDFPTELYHSLPCSRSLENGQIK). Residues 81–109 (KVLV…LVFE) and 359–372 (TFSW…LLGD) each bind FAD. The 65-residue stretch at 547 to 611 (LVLSRDENMP…HGTWITDNEG (65 aa)) folds into the FHA domain.

The cofactor is FAD. In terms of tissue distribution, higher expression in leaves than in roots.

It localises to the plastid. The protein localises to the chloroplast membrane. The protein resides in the chloroplast thylakoid membrane. The catalysed reaction is all-trans-zeaxanthin + 4 reduced [2Fe-2S]-[ferredoxin] + 2 O2 + 4 H(+) = all-trans-violaxanthin + 4 oxidized [2Fe-2S]-[ferredoxin] + 2 H2O. Its pathway is plant hormone biosynthesis; abscisate biosynthesis. Functionally, converts zeaxanthin into antheraxanthin and subsequently violaxanthin. Involved in the epoxidation of zeaxanthin. Plays an important role in resistance to stresses, seed development and dormancy. This is Zeaxanthin epoxidase, chloroplastic (ABA2) from Nicotiana plumbaginifolia (Leadwort-leaved tobacco).